A 229-amino-acid chain; its full sequence is Lipoprotein-releasing system ATP-binding protein LolD (229 aa).

One can recognise an ABC transporter domain in the interval 6–229 (LELDAIERTY…DGHLTPYVPA (224 aa)). 42–49 (GPSGSGKS) serves as a coordination point for ATP.

The protein belongs to the ABC transporter superfamily. Lipoprotein translocase (TC 3.A.1.125) family. The complex is composed of two ATP-binding proteins (LolD) and two transmembrane proteins (LolC and LolE).

The protein localises to the cell inner membrane. Its function is as follows. Part of the ABC transporter complex LolCDE involved in the translocation of mature outer membrane-directed lipoproteins, from the inner membrane to the periplasmic chaperone, LolA. Responsible for the formation of the LolA-lipoprotein complex in an ATP-dependent manner. In Maricaulis maris (strain MCS10) (Caulobacter maris), this protein is Lipoprotein-releasing system ATP-binding protein LolD.